The chain runs to 309 residues: Putative G-protein coupled receptor B0244.4 (309 aa).

6 consecutive transmembrane segments (helical) span residues serine 39 to leucine 59, tyrosine 82 to leucine 102, isoleucine 114 to valine 134, phenylalanine 162 to alanine 182, isoleucine 204 to leucine 224, and tryptophan 256 to valine 276.

The protein belongs to the G-protein coupled receptor 1 family. B0244 subfamily.

Its subcellular location is the cell membrane. The polypeptide is Putative G-protein coupled receptor B0244.4 (Caenorhabditis elegans).